The primary structure comprises 1192 residues: Coiled-coil domain-containing protein 40 (1192 aa).

Disordered regions lie at residues 1-78 (MMDA…PGMD), 126-153 (KAKHRKVRPQAEVESTGRAAPEGELEVS), 173-196 (SSPEVSYSDISPLEMGEDDTNVSA), 211-246 (EPIEPTEPPEPAEPPKPAETPEDSTVRAPAHPYQRD), and 261-289 (GSLTPSDTDDLPLETDEPPQQESVQSTPR). Positions 27-45 (PETEVEFIGETAPDTDVEF) are enriched in acidic residues. Residues 215 to 228 (PTEPPEPAEPPKPA) are compositionally biased toward pro residues. Positions 267 to 279 (DTDDLPLETDEPP) are enriched in acidic residues. At Ser306 the chain carries Phosphoserine. 7 coiled-coil regions span residues 308-369 (EALL…ATKQ), 425-451 (KTCQTANEERKKLAALQTEVESLALHL), 581-649 (DSEI…MLNK), 733-768 (NTNCKIDMHKKTLAEMDKEVKRFNDLITNSESEIAR), 830-871 (LQQE…KIAH), 919-972 (LRTL…EMRS), and 1044-1118 (QQRE…IVTL).

It belongs to the CCDC40 family. Specifically expressed in the embryonic node and midline.

It is found in the cytoplasm. It localises to the cell projection. The protein localises to the cilium. In terms of biological role, required for assembly of dynein regulatory complex (DRC) and inner dynein arm (IDA) complexes, which are responsible for ciliary beat regulation, thereby playing a central role in motility in cilia and flagella. Probably acts together with CCDC39 to form a molecular ruler that determines the 96 nanometer (nm) repeat length and arrangements of components in cilia and flagella. Not required for outer dynein arm complexes assembly. Required for axonemal recruitment of CCDC39. In Mus musculus (Mouse), this protein is Coiled-coil domain-containing protein 40.